The sequence spans 553 residues: Methionine--tRNA ligase (553 aa).

Positions 12-22 (PYANSQLHLGH) match the 'HIGH' region motif. Residues Cys144, Cys147, Cys157, and Cys160 each coordinate Zn(2+). Residues 332-336 (KFSKS) carry the 'KMSKS' region motif. Residue Lys335 coordinates ATP.

Belongs to the class-I aminoacyl-tRNA synthetase family. MetG type 1 subfamily. As to quaternary structure, monomer. Requires Zn(2+) as cofactor.

It is found in the cytoplasm. It catalyses the reaction tRNA(Met) + L-methionine + ATP = L-methionyl-tRNA(Met) + AMP + diphosphate. Its function is as follows. Is required not only for elongation of protein synthesis but also for the initiation of all mRNA translation through initiator tRNA(fMet) aminoacylation. This Dehalococcoides mccartyi (strain CBDB1) protein is Methionine--tRNA ligase.